The sequence spans 489 residues: MESTFSSPAEAALQREAGVPGQFTPPEDLDRVYELERVTRFICDLGCQRVALQFPDQLLGDAGAVAARLEEVTGSKMFILGDTAYGSCCVDVLGAEQAGAQALVHFGPACLSPPASLLPITFVLGRRPVALELCAKAFEAQNPDPTALVVLLSEPACAHALEPLATLLRPKYQDLLISSPALPLPVGSLSSQPESLERFGRRFPLNPGRSLEEYGAFYVGASQASSDPNLDPDLSRLLLGWTPGRPFFSCCPDTGQTQDQGAKAGRLRARRLYLVERARDARVVGLLVGTLGVAQHLEALAHLRKLTEAAGKRSYVLALGKPTPAKLANFPEMDVFVLLACPLGALTLQPSGGFFRPILTPCELEAACNPAWPPPGLAPHLTHYAELLPGSPFHVPLPPPESELWDTPDVSLISGELRPPPPWKSSDDTKCSALTPRPQLELAESSPAASFLSSRSWQGLEPRLGQTPVKEAVQGRRGIAIAYEDEGSS.

Met-1 carries the N-acetylmethionine modification. Residue Ser-7 is modified to Phosphoserine. The [4Fe-4S] cluster site is built by Cys-89, Cys-110, and Cys-341. Thr-435 carries the phosphothreonine modification. A phosphoserine mark is found at Ser-446 and Ser-456. The residue at position 467 (Thr-467) is a Phosphothreonine. A Phosphoserine modification is found at Ser-488.

Belongs to the DPH1/DPH2 family. DPH2 subfamily. In terms of assembly, component of the 2-(3-amino-3-carboxypropyl)histidine synthase complex composed of DPH1, DPH2, DPH3 and a NADH-dependent reductase. Interacts with DPH1. It depends on [4Fe-4S] cluster as a cofactor.

It participates in protein modification; peptidyl-diphthamide biosynthesis. Required for the first step of diphthamide biosynthesis, a post-translational modification of histidine which occurs in elongation factor 2. DPH1 and DPH2 transfer a 3-amino-3-carboxypropyl (ACP) group from S-adenosyl-L-methionine (SAM) to a histidine residue, the reaction is assisted by a reduction system comprising DPH3 and a NADH-dependent reductase. Facilitates the reduction of the catalytic iron-sulfur cluster found in the DPH1 subunit. The sequence is that of 2-(3-amino-3-carboxypropyl)histidine synthase subunit 2 (Dph2) from Rattus norvegicus (Rat).